The following is a 98-amino-acid chain: NADH-ubiquinone oxidoreductase chain 4L (98 aa).

3 helical membrane-spanning segments follow: residues 1 to 21 (MSLV…GLLM), 29 to 49 (SLLC…IMIL), and 61 to 81 (IILL…LVMV).

It belongs to the complex I subunit 4L family. As to quaternary structure, core subunit of respiratory chain NADH dehydrogenase (Complex I) which is composed of 45 different subunits.

It localises to the mitochondrion inner membrane. It catalyses the reaction a ubiquinone + NADH + 5 H(+)(in) = a ubiquinol + NAD(+) + 4 H(+)(out). Functionally, core subunit of the mitochondrial membrane respiratory chain NADH dehydrogenase (Complex I) which catalyzes electron transfer from NADH through the respiratory chain, using ubiquinone as an electron acceptor. Part of the enzyme membrane arm which is embedded in the lipid bilayer and involved in proton translocation. The sequence is that of NADH-ubiquinone oxidoreductase chain 4L (MT-ND4L) from Sorex unguiculatus (Long-clawed shrew).